The sequence spans 87 residues: Neurotoxin Cex1 (87 aa).

The N-terminal stretch at 1 to 19 (MNSLLMITTCLVLFGTVWA) is a signal peptide. The 66-residue stretch at 20–85 (KEGYLVSKST…TYPIPGKSCG (66 aa)) folds into the LCN-type CS-alpha/beta domain. Disulfide bonds link Cys31/Cys84, Cys35/Cys60, Cys44/Cys65, and Cys48/Cys67. Residue Cys84 is modified to Cysteine amide. A propeptide spanning residues 85–87 (GKK) is cleaved from the precursor.

Belongs to the long (4 C-C) scorpion toxin superfamily. Sodium channel inhibitor family. Beta subfamily. Expressed by the venom gland.

The protein localises to the secreted. In terms of biological role, beta toxins bind voltage-independently at site-4 of sodium channels (Nav) and shift the voltage of activation toward more negative potentials thereby affecting sodium channel activation and promoting spontaneous and repetitive firing. The sequence is that of Neurotoxin Cex1 from Centruroides exilicauda (Bark scorpion).